We begin with the raw amino-acid sequence, 159 residues long: SsrA-binding protein (159 aa).

The interval 134–159 (KLHDKRETSKERDWNRQKNRLLKERG) is disordered. The segment covering 137 to 159 (DKRETSKERDWNRQKNRLLKERG) has biased composition (basic and acidic residues).

Belongs to the SmpB family.

The protein localises to the cytoplasm. Functionally, required for rescue of stalled ribosomes mediated by trans-translation. Binds to transfer-messenger RNA (tmRNA), required for stable association of tmRNA with ribosomes. tmRNA and SmpB together mimic tRNA shape, replacing the anticodon stem-loop with SmpB. tmRNA is encoded by the ssrA gene; the 2 termini fold to resemble tRNA(Ala) and it encodes a 'tag peptide', a short internal open reading frame. During trans-translation Ala-aminoacylated tmRNA acts like a tRNA, entering the A-site of stalled ribosomes, displacing the stalled mRNA. The ribosome then switches to translate the ORF on the tmRNA; the nascent peptide is terminated with the 'tag peptide' encoded by the tmRNA and targeted for degradation. The ribosome is freed to recommence translation, which seems to be the essential function of trans-translation. This is SsrA-binding protein from Sinorhizobium fredii (strain NBRC 101917 / NGR234).